Reading from the N-terminus, the 152-residue chain is Lipoprotein signal peptidase (152 aa).

Transmembrane regions (helical) follow at residues 33–53 (VVPPAFYLTYIMNPGAAFGLL), 58–78 (MLFVTVTVIIIAGVLVGYFKI), and 83–102 (PVLDYGLGLVAGGALGNLAD). Catalysis depends on residues D111 and D125. The chain crosses the membrane as a helical span at residues 120–140 (VFNLADTAIVTGAFLLAWALL).

Belongs to the peptidase A8 family.

It localises to the cell membrane. It carries out the reaction Release of signal peptides from bacterial membrane prolipoproteins. Hydrolyzes -Xaa-Yaa-Zaa-|-(S,diacylglyceryl)Cys-, in which Xaa is hydrophobic (preferably Leu), and Yaa (Ala or Ser) and Zaa (Gly or Ala) have small, neutral side chains.. The protein operates within protein modification; lipoprotein biosynthesis (signal peptide cleavage). Its function is as follows. This protein specifically catalyzes the removal of signal peptides from prolipoproteins. This is Lipoprotein signal peptidase from Pelotomaculum thermopropionicum (strain DSM 13744 / JCM 10971 / SI).